The primary structure comprises 616 residues: Glutamine--fructose-6-phosphate aminotransferase [isomerizing] (616 aa).

C2 (nucleophile; for GATase activity) is an active-site residue. A Glutamine amidotransferase type-2 domain is found at 2–221 (CGIVGYVGTD…QDQIVTITPE (220 aa)). 2 SIS domains span residues 288-428 (LGDE…VRGT) and 461-606 (LAHW…VDQP). K611 serves as the catalytic For Fru-6P isomerization activity.

As to quaternary structure, homodimer.

Its subcellular location is the cytoplasm. The catalysed reaction is D-fructose 6-phosphate + L-glutamine = D-glucosamine 6-phosphate + L-glutamate. Functionally, catalyzes the first step in hexosamine metabolism, converting fructose-6P into glucosamine-6P using glutamine as a nitrogen source. In Leifsonia xyli subsp. xyli (strain CTCB07), this protein is Glutamine--fructose-6-phosphate aminotransferase [isomerizing].